Reading from the N-terminus, the 164-residue chain is Cyanate hydratase (164 aa).

Active-site residues include arginine 90, glutamate 93, and serine 116.

This sequence belongs to the cyanase family.

The enzyme catalyses cyanate + hydrogencarbonate + 3 H(+) = NH4(+) + 2 CO2. In terms of biological role, catalyzes the reaction of cyanate with bicarbonate to produce ammonia and carbon dioxide. The sequence is that of Cyanate hydratase from Vitis vinifera (Grape).